We begin with the raw amino-acid sequence, 153 residues long: SsrA-binding protein (153 aa).

The segment at 129–153 (KREDMKKKDQSREMAQALRERSKSH) is disordered.

It belongs to the SmpB family.

Its subcellular location is the cytoplasm. Its function is as follows. Required for rescue of stalled ribosomes mediated by trans-translation. Binds to transfer-messenger RNA (tmRNA), required for stable association of tmRNA with ribosomes. tmRNA and SmpB together mimic tRNA shape, replacing the anticodon stem-loop with SmpB. tmRNA is encoded by the ssrA gene; the 2 termini fold to resemble tRNA(Ala) and it encodes a 'tag peptide', a short internal open reading frame. During trans-translation Ala-aminoacylated tmRNA acts like a tRNA, entering the A-site of stalled ribosomes, displacing the stalled mRNA. The ribosome then switches to translate the ORF on the tmRNA; the nascent peptide is terminated with the 'tag peptide' encoded by the tmRNA and targeted for degradation. The ribosome is freed to recommence translation, which seems to be the essential function of trans-translation. This is SsrA-binding protein from Geobacter metallireducens (strain ATCC 53774 / DSM 7210 / GS-15).